The sequence spans 313 residues: MSNTHITDWSSKDGEFRRQVSSFRERISPEHKYFQPEKDRYHLYVSYACPWAHRTLIVRKLKGLENVIPVHVVGWLMGPNGWNFDKENDSTGDPLYNSPYLRNLYFRADPNYNMRFTVPVLWDSKYNTIVNNESAEIIRMFNDAFNEVIEDEEKRVVDLYPSSLRTKIDELNDYFYDTVNNGVYKTGFATTAEAYEKNVRVVFQGLDRLEQVLKESKGPFLLGDHLTETDVRLYTTIVRFDPVYVQHFKCNIGTIRHNYPHINQWLKRLYWKHPAFHETTDFKHIKCHYTQSHTQINPLGITPLGPIPNVEYF.

Residue C49 is the Nucleophile of the active site. The region spanning 161–289 (PSSLRTKIDE…TDFKHIKCHY (129 aa)) is the GST C-terminal domain.

It belongs to the GST superfamily. Omega family.

It is found in the cytoplasm. It localises to the nucleus. Its subcellular location is the golgi apparatus. It catalyses the reaction RX + glutathione = an S-substituted glutathione + a halide anion + H(+). The catalysed reaction is L-dehydroascorbate + 2 glutathione = glutathione disulfide + L-ascorbate. Functionally, active as '1-Cys' thiol transferase against beta-hydroxyethyl disulfide (HED), as dehydroascorbate reductase and as dimethylarsinic acid reductase, while not active against the standard GST substrate 1-chloro-2,4-dinitrobenzene (CDNB). May be involved in cell wall organization and biogenesis. The polypeptide is Glutathione S-transferase omega-like 2 (gto2) (Schizosaccharomyces pombe (strain 972 / ATCC 24843) (Fission yeast)).